Reading from the N-terminus, the 152-residue chain is Lipoprotein signal peptidase (152 aa).

Transmembrane regions (helical) follow at residues 5 to 25, 61 to 81, and 84 to 104; these read LFVLSLILLVALDQLSKFWIV, WFFVVITVLVIGYAIYYLATH, and LNIWKQLALLLIISGGIGNFI. Catalysis depends on residues D114 and D130. Residues 125-145 form a helical membrane-spanning segment; the sequence is IFNVADSYLTVGVILLLICLW.

Belongs to the peptidase A8 family.

Its subcellular location is the cell membrane. The catalysed reaction is Release of signal peptides from bacterial membrane prolipoproteins. Hydrolyzes -Xaa-Yaa-Zaa-|-(S,diacylglyceryl)Cys-, in which Xaa is hydrophobic (preferably Leu), and Yaa (Ala or Ser) and Zaa (Gly or Ala) have small, neutral side chains.. It functions in the pathway protein modification; lipoprotein biosynthesis (signal peptide cleavage). In terms of biological role, this protein specifically catalyzes the removal of signal peptides from prolipoproteins. The sequence is that of Lipoprotein signal peptidase from Streptococcus pyogenes serotype M1.